A 142-amino-acid polypeptide reads, in one-letter code: Coactosin-like protein (142 aa).

Residue Ala2 is modified to N-acetylalanine. One can recognise an ADF-H domain in the interval 2–130; it reads ATKIDKEACR…EEDFIKSELK (129 aa). The tract at residues 66 to 75 is flexible and important for F-actin binding; sequence TGDAMSKRSK. N6-acetyllysine is present on residues Lys102 and Lys126.

Belongs to the actin-binding proteins ADF family. Coactosin subfamily. In terms of assembly, interacts with 5-lipoxygenase (ALOX5/5LO) in a calcium-independent manner. Binds to F-actin with a stoichiometry of 1:2. In terms of tissue distribution, widely expressed with highest levels in placenta, lung, kidney and peripheral blood leukocytes and lower levels in brain, liver and pancreas.

The protein resides in the cytoplasm. The protein localises to the cytoskeleton. Its subcellular location is the nucleus. Binds to F-actin in a calcium-independent manner. Has no direct effect on actin depolymerization. Acts as a chaperone for ALOX5 (5LO), influencing both its stability and activity in leukotrienes synthesis. The polypeptide is Coactosin-like protein (COTL1) (Homo sapiens (Human)).